The chain runs to 607 residues: Fucose-1-phosphate guanylyltransferase (607 aa).

A disordered region spans residues 1–21; the sequence is MRAVRRGLREGGAMAAARDPP.

Expressed in many tissues.

It is found in the cytoplasm. It carries out the reaction beta-L-fucose 1-phosphate + GTP + H(+) = GDP-beta-L-fucose + diphosphate. In terms of biological role, catalyzes the formation of GDP-L-fucose from GTP and L-fucose-1-phosphate. Functions as a salvage pathway to reutilize L-fucose arising from the turnover of glycoproteins and glycolipids. The protein is Fucose-1-phosphate guanylyltransferase of Homo sapiens (Human).